A 377-amino-acid chain; its full sequence is MTKKRVALIFGGNSSEHDVSKRSAQNFYNAIEATDKYEIIVFAIAQNGFFLDTESSKKILALEDEQPIVDAFMKTVDTSDPLARIHALKSAGDFDIFFPVVHGNLGEDGTLQGLFKLLDKPYVGAPLRGHAVSFDKALTKELLTVNGIRNTKYIVVDPESANNWSWDKIVAELGNIVFVKAANQGSSVGISRVTNAEEYTEALSDSFQYDYKVLIEEAVNGARELEVGVIGNDQPLVSEIGAHTVPNQGSGDGWYDYNNKFVDNSAVHFEIPAQLSPEVTKEVKQMALDAYKVLNLRGEARMDFLLDENNVPYLGEPNTLPGFTNMSLFKRLWDYSDINNAKLVDMLIDYGFEDFAQNKKLSYSFVSLGEEKIGKFN.

In terms of domain architecture, ATP-grasp spans 140-349; sequence KELLTVNGIR…NAKLVDMLID (210 aa). 170 to 225 is a binding site for ATP; the sequence is VAELGNIVFVKAANQGSSVGISRVTNAEEYTEALSDSFQYDYKVLIEEAVNGAREL. The Mg(2+) site is built by Asp-303, Glu-316, and Asn-318.

This sequence belongs to the D-alanine--D-alanine ligase family. Mg(2+) is required as a cofactor. The cofactor is Mn(2+).

The protein resides in the cytoplasm. The enzyme catalyses 2 D-alanine + ATP = D-alanyl-D-alanine + ADP + phosphate + H(+). The protein operates within cell wall biogenesis; peptidoglycan biosynthesis. In terms of biological role, cell wall formation. In Leuconostoc mesenteroides, this protein is D-alanine--D-alanine ligase.